The following is a 260-amino-acid chain: UPF0294 protein YE0917 (260 aa).

The protein belongs to the UPF0294 family.

It is found in the cytoplasm. In Yersinia enterocolitica serotype O:8 / biotype 1B (strain NCTC 13174 / 8081), this protein is UPF0294 protein YE0917.